A 77-amino-acid polypeptide reads, in one-letter code: Large ribosomal subunit protein bL28 (77 aa).

A disordered region spans residues 1-25; the sequence is MARVCQVTGKAPMSGNNVSHANNKT.

Belongs to the bacterial ribosomal protein bL28 family.

The chain is Large ribosomal subunit protein bL28 from Paraburkholderia xenovorans (strain LB400).